The following is a 284-amino-acid chain: Bifunctional protein FolD (284 aa).

NADP(+) is bound by residues G165–S167 and S190.

Belongs to the tetrahydrofolate dehydrogenase/cyclohydrolase family. Homodimer.

It catalyses the reaction (6R)-5,10-methylene-5,6,7,8-tetrahydrofolate + NADP(+) = (6R)-5,10-methenyltetrahydrofolate + NADPH. The enzyme catalyses (6R)-5,10-methenyltetrahydrofolate + H2O = (6R)-10-formyltetrahydrofolate + H(+). It participates in one-carbon metabolism; tetrahydrofolate interconversion. In terms of biological role, catalyzes the oxidation of 5,10-methylenetetrahydrofolate to 5,10-methenyltetrahydrofolate and then the hydrolysis of 5,10-methenyltetrahydrofolate to 10-formyltetrahydrofolate. The sequence is that of Bifunctional protein FolD from Streptococcus sanguinis (strain SK36).